Reading from the N-terminus, the 643-residue chain is Threonine--tRNA ligase (643 aa).

The TGS domain occupies 1-62; that stretch reads MSFSVTLPDG…DEDVEAAIIT (62 aa). Residues 239–537 form a catalytic region; sequence DHRTIGRDLD…LTEIYKGAFP (299 aa). Positions 333, 384, and 514 each coordinate Zn(2+).

This sequence belongs to the class-II aminoacyl-tRNA synthetase family. Homodimer. Zn(2+) is required as a cofactor.

The protein localises to the cytoplasm. It catalyses the reaction tRNA(Thr) + L-threonine + ATP = L-threonyl-tRNA(Thr) + AMP + diphosphate + H(+). Functionally, catalyzes the attachment of threonine to tRNA(Thr) in a two-step reaction: L-threonine is first activated by ATP to form Thr-AMP and then transferred to the acceptor end of tRNA(Thr). Also edits incorrectly charged L-seryl-tRNA(Thr). This Lactobacillus gasseri (strain ATCC 33323 / DSM 20243 / BCRC 14619 / CIP 102991 / JCM 1131 / KCTC 3163 / NCIMB 11718 / NCTC 13722 / AM63) protein is Threonine--tRNA ligase.